Here is a 203-residue protein sequence, read N- to C-terminus: Small ribosomal subunit protein uS4 (203 aa).

The S4 RNA-binding domain occupies Arg93 to Val156.

Belongs to the universal ribosomal protein uS4 family. Part of the 30S ribosomal subunit. Contacts protein S5. The interaction surface between S4 and S5 is involved in control of translational fidelity.

One of the primary rRNA binding proteins, it binds directly to 16S rRNA where it nucleates assembly of the body of the 30S subunit. Its function is as follows. With S5 and S12 plays an important role in translational accuracy. The chain is Small ribosomal subunit protein uS4 from Streptococcus sanguinis (strain SK36).